The primary structure comprises 155 residues: Small ribosomal subunit protein uS7cz/uS7cy (155 aa).

It belongs to the universal ribosomal protein uS7 family. Part of the 30S ribosomal subunit.

The protein localises to the plastid. In terms of biological role, one of the primary rRNA binding proteins, it binds directly to 16S rRNA where it nucleates assembly of the head domain of the 30S subunit. The protein is Small ribosomal subunit protein uS7cz/uS7cy (rps7-A) of Epifagus virginiana (Beechdrops).